A 614-amino-acid polypeptide reads, in one-letter code: Acid phosphatase (614 aa).

An N-terminal signal peptide occupies residues 1–22 (MKGTAASALLVALSATAAQARP). The Fibronectin type-III domain occupies 80-176 (IPKGMHIHYQ…EVLSFKTSRP (97 aa)). 13 N-linked (GlcNAc...) asparagine glycosylation sites follow: Asn110, Asn161, Asn242, Asn295, Asn333, Asn340, Asn352, Asn408, Asn429, Asn512, Asn523, Asn559, and Asn578. A propeptide spanning residues 606 to 614 (VAGGKKLHS) is cleaved from the precursor.

Monomer. Cu cation serves as cofactor. Post-translationally, glycosylated; probably with N-linked high-mannose oligosaccharides.

It localises to the secreted. The enzyme catalyses a phosphate monoester + H2O = an alcohol + phosphate. Its activity is regulated as follows. Competitively inhibited by phosphomycin and inorganic orthophosphate. This chain is Acid phosphatase (aphA), found in Aspergillus ficuum.